Reading from the N-terminus, the 481-residue chain is Protein nucleotidyltransferase YdiU (481 aa).

8 residues coordinate ATP: G87, G89, R90, K110, D122, G123, R173, and R180. Catalysis depends on D249, which acts as the Proton acceptor. 2 residues coordinate Mg(2+): N250 and D259. D259 is an ATP binding site.

Belongs to the SELO family. Requires Mg(2+) as cofactor. Mn(2+) serves as cofactor.

It catalyses the reaction L-seryl-[protein] + ATP = 3-O-(5'-adenylyl)-L-seryl-[protein] + diphosphate. The catalysed reaction is L-threonyl-[protein] + ATP = 3-O-(5'-adenylyl)-L-threonyl-[protein] + diphosphate. It carries out the reaction L-tyrosyl-[protein] + ATP = O-(5'-adenylyl)-L-tyrosyl-[protein] + diphosphate. The enzyme catalyses L-histidyl-[protein] + UTP = N(tele)-(5'-uridylyl)-L-histidyl-[protein] + diphosphate. It catalyses the reaction L-seryl-[protein] + UTP = O-(5'-uridylyl)-L-seryl-[protein] + diphosphate. The catalysed reaction is L-tyrosyl-[protein] + UTP = O-(5'-uridylyl)-L-tyrosyl-[protein] + diphosphate. In terms of biological role, nucleotidyltransferase involved in the post-translational modification of proteins. It can catalyze the addition of adenosine monophosphate (AMP) or uridine monophosphate (UMP) to a protein, resulting in modifications known as AMPylation and UMPylation. This Mycobacterium sp. (strain KMS) protein is Protein nucleotidyltransferase YdiU.